Reading from the N-terminus, the 331-residue chain is Ketol-acid reductoisomerase (NADP(+)) (331 aa).

Residues 1 to 181 (MKMYYDADAD…GGTRAGVIET (181 aa)) form the KARI N-terminal Rossmann domain. NADP(+)-binding positions include 24-27 (YGSQ), Arg-47, Ser-50, and 82-85 (DEKQ). Residue His-107 is part of the active site. An NADP(+)-binding site is contributed by Gly-133. Residues 182–327 (TFREETETDL…KKLRAMMPWL (146 aa)) enclose the KARI C-terminal knotted domain. Residues Asp-190, Glu-194, Glu-226, and Glu-230 each contribute to the Mg(2+) site. Ser-251 provides a ligand contact to substrate.

The protein belongs to the ketol-acid reductoisomerase family. It depends on Mg(2+) as a cofactor.

The enzyme catalyses (2R)-2,3-dihydroxy-3-methylbutanoate + NADP(+) = (2S)-2-acetolactate + NADPH + H(+). The catalysed reaction is (2R,3R)-2,3-dihydroxy-3-methylpentanoate + NADP(+) = (S)-2-ethyl-2-hydroxy-3-oxobutanoate + NADPH + H(+). It participates in amino-acid biosynthesis; L-isoleucine biosynthesis; L-isoleucine from 2-oxobutanoate: step 2/4. It functions in the pathway amino-acid biosynthesis; L-valine biosynthesis; L-valine from pyruvate: step 2/4. Functionally, involved in the biosynthesis of branched-chain amino acids (BCAA). Catalyzes an alkyl-migration followed by a ketol-acid reduction of (S)-2-acetolactate (S2AL) to yield (R)-2,3-dihydroxy-isovalerate. In the isomerase reaction, S2AL is rearranged via a Mg-dependent methyl migration to produce 3-hydroxy-3-methyl-2-ketobutyrate (HMKB). In the reductase reaction, this 2-ketoacid undergoes a metal-dependent reduction by NADPH to yield (R)-2,3-dihydroxy-isovalerate. In Heliobacterium modesticaldum (strain ATCC 51547 / Ice1), this protein is Ketol-acid reductoisomerase (NADP(+)).